The primary structure comprises 919 residues: Coiled-coil domain-containing protein 66 (919 aa).

Disordered stretches follow at residues K145–N166, E456–E505, E724–P744, and L762–H816. The segment covering Q150–Q161 has biased composition (polar residues). The stretch at H467 to K558 forms a coiled coil. A mediates localization to cilia, centrosomes and spindle microtubules and the interaction with PCM1, CEP290, CEP104 and CSPP1 region spans residues G570–F919.

Homodimer; disulfide-linked. Interacts with CEP290. Interacts with PCM1. Interacts with ARMC9, TOGARAM1, CSPP1 and CEP104. Interacts with CDK5RAP2, CEP152, CEP192, TBG1 and PRC1. As to expression, expressed in retina and blood. Expressed in retina, mainly in photoreceptors but also in outer plexiform and ganglion cell layers (at protein level).

The protein localises to the cytoplasm. It is found in the cytoskeleton. The protein resides in the microtubule organizing center. Its subcellular location is the centrosome. It localises to the centriolar satellite. The protein localises to the cell projection. It is found in the cilium. The protein resides in the cilium basal body. Its subcellular location is the cilium axoneme. It localises to the photoreceptor inner segment. The protein localises to the photoreceptor outer segment. Microtubule-binding protein required for ciliogenesis. May function in ciliogenesis by mediating the transport of proteins like BBS4 to the cilium, but also through the organization of the centriolar satellites. Required for the assembly of signaling-competent cilia with proper structure and length. Mediates this function in part by regulating transition zone assembly and basal body recruitment of the IFT-B complex. Cooperates with the ciliopathy proteins CSPP1 and CEP104 during cilium length regulation. Plays two important roles during cell division. First, is required for mitotic progression via regulation of spindle assembly, organization and orientation, levels of spindle microtubules (MTs), kinetochore-fiber integrity, and chromosome alignment. Second, functions during cytokinesis in part by regulating assembly and organization of central spindle and midbody MTs. Plays a role in retina morphogenesis and/or homeostasis. This is Coiled-coil domain-containing protein 66 (CCDC66) from Canis lupus familiaris (Dog).